A 268-amino-acid polypeptide reads, in one-letter code: Protein MGF 300-1L (268 aa).

Over 1–175 the chain is Cytoplasmic; the sequence is MVSLTTCCLK…QTFKTFYAKN (175 aa). Residues 176–193 form a helical membrane-spanning segment; the sequence is YSLSTLYCIFLAIYYKLY. Over 194-268 the chain is Extracellular; that stretch reads TALRKMVKIY…MYAFSQNDYW (75 aa). An N-linked (GlcNAc...) asparagine; by host glycan is attached at N227.

Belongs to the asfivirus MGF 300 family.

It localises to the host membrane. Plays a role in virus cell tropism, and may be required for efficient virus replication in macrophages. The protein is Protein MGF 300-1L of African swine fever virus (strain Badajoz 1971 Vero-adapted) (Ba71V).